The following is a 414-amino-acid chain: Dimethylsulfoniopropionate lyase DddY (414 aa).

The first 18 residues, 1-18 (MKYMVLFSGLLFSNVLVA), serve as a signal peptide directing secretion.

Belongs to the DMSP lyase DddY family.

It localises to the periplasm. The catalysed reaction is S,S-dimethyl-beta-propiothetin = acrylate + dimethyl sulfide + H(+). Functionally, catalyzes the cleavage of dimethylsulfoniopropionate (DMSP) into dimethyl sulfide (DMS) and acrylate. The polypeptide is Dimethylsulfoniopropionate lyase DddY (Shewanella woodyi (strain ATCC 51908 / MS32)).